The primary structure comprises 689 residues: Acyl-coenzyme A oxidase 1 (689 aa).

Positions 149 and 188 each coordinate FAD. The active-site Proton acceptor is Glu444.

It belongs to the acyl-CoA oxidase family. In terms of assembly, heteropentamer composed of five different subunits. The cofactor is FAD.

The protein resides in the peroxisome. The catalysed reaction is a 2,3-saturated acyl-CoA + O2 = a (2E)-enoyl-CoA + H2O2. It participates in lipid metabolism; peroxisomal fatty acid beta-oxidation. This chain is Acyl-coenzyme A oxidase 1 (POX1), found in Yarrowia lipolytica (strain CLIB 122 / E 150) (Yeast).